A 234-amino-acid polypeptide reads, in one-letter code: UPF0173 metal-dependent hydrolase Smed_0942 (234 aa).

It belongs to the UPF0173 family.

This chain is UPF0173 metal-dependent hydrolase Smed_0942, found in Sinorhizobium medicae (strain WSM419) (Ensifer medicae).